Consider the following 428-residue polypeptide: Adenylosuccinate synthetase (428 aa).

Residues 12 to 18 and 40 to 42 contribute to the GTP site; these read GDEGKGK and GHT. The active-site Proton acceptor is aspartate 13. 2 residues coordinate Mg(2+): aspartate 13 and glycine 40. IMP-binding positions include 13–16, 38–41, threonine 130, arginine 144, glutamine 225, threonine 240, and arginine 304; these read DEGK and NAGH. The active-site Proton donor is histidine 41. A substrate-binding site is contributed by 300 to 306; that stretch reads VNTGRSR. GTP contacts are provided by residues arginine 306, 332-334, and 414-416; these read KID and GVG.

This sequence belongs to the adenylosuccinate synthetase family. In terms of assembly, homodimer. It depends on Mg(2+) as a cofactor.

Its subcellular location is the cytoplasm. The enzyme catalyses IMP + L-aspartate + GTP = N(6)-(1,2-dicarboxyethyl)-AMP + GDP + phosphate + 2 H(+). The protein operates within purine metabolism; AMP biosynthesis via de novo pathway; AMP from IMP: step 1/2. Functionally, plays an important role in the de novo pathway of purine nucleotide biosynthesis. Catalyzes the first committed step in the biosynthesis of AMP from IMP. The sequence is that of Adenylosuccinate synthetase from Clostridium beijerinckii (strain ATCC 51743 / NCIMB 8052) (Clostridium acetobutylicum).